The following is an 83-amino-acid chain: Early lactation protein (83 aa).

Asn14, Asn31, and Asn42 each carry an N-linked (GlcNAc...) asparagine glycan. Residues 23–73 (CLLPPVRGNCSSQILHYFYNTTSRTCETFIYSGCNGNRNNFNSEEYCLKTC) enclose the BPTI/Kunitz inhibitor domain. 3 cysteine pairs are disulfide-bonded: Cys23-Cys73, Cys32-Cys56, and Cys48-Cys69.

N-glycosylated. In terms of tissue distribution, found in the whey fraction of milk.

It is found in the secreted. The sequence is that of Early lactation protein (ELP) from Notamacropus eugenii (Tammar wallaby).